The sequence spans 463 residues: Heterogeneous nuclear ribonucleoprotein K (463 aa).

Residue methionine 1 is modified to N-acetylmethionine. The disordered stretch occupies residues 1-37 (METEQPEETFPNTETNGEFGKRPAEDMEEEQAFKRSR). The necessary for interaction with DDX1 stretch occupies residues 1-276 (METEQPEETF…GRGGRPMPPS (276 aa)). The segment covering 19–37 (FGKRPAEDMEEEQAFKRSR) has biased composition (basic and acidic residues). Lysine 34 bears the N6-acetyllysine; alternate mark. Lysine 34 is covalently cross-linked (Glycyl lysine isopeptide (Lys-Gly) (interchain with G-Cter in SUMO1); alternate). Residue lysine 34 forms a Glycyl lysine isopeptide (Lys-Gly) (interchain with G-Cter in SUMO2); alternate linkage. The residue at position 36 (serine 36) is a Phosphoserine. Threonine 39 is modified (phosphothreonine). The KH 1 domain maps to 42-104 (MVELRILLQS…ETIGEILKKI (63 aa)). Glycyl lysine isopeptide (Lys-Gly) (interchain with G-Cter in SUMO2) cross-links involve residues lysine 52 and lysine 60. 2 repeat units span residues 54 to 76 (AGAVIGKGGKNIKALRTDYNASV) and 59 to 62 (GKGG). The segment at 54-421 (AGAVIGKGGK…QIRHESGASI (368 aa)) is 2 X 22 AA approximate repeats. The interval 59-407 (GKGGKNIKAL…LAGSIIGKGG (349 aa)) is 5 X 4 AA repeats of G-X-G-G. Serine 75 and serine 116 each carry phosphoserine. In terms of domain architecture, KH 2 spans 144-209 (DCELRLLIHQ…DRVVECIKII (66 aa)). Lysine 163 participates in a covalent cross-link: Glycyl lysine isopeptide (Lys-Gly) (interchain with G-Cter in SUMO1); alternate. Lysine 163 is covalently cross-linked (Glycyl lysine isopeptide (Lys-Gly) (interchain with G-Cter in SUMO2); alternate). Lysine 198 is subject to N6-acetyllysine. The segment at 209–337 (ILDLISESPI…RPGDRYDGMV (129 aa)) is interaction with ZIK1. Serine 214 and serine 216 each carry phosphoserine. Lysine 219 participates in a covalent cross-link: Glycyl lysine isopeptide (Lys-Gly) (interchain with G-Cter in SUMO2); alternate. N6-succinyllysine; alternate is present on lysine 219. Positions 236–273 (YGGFTMMFDDRRGRPVGFPMRGRGGFDRMPPGRGGRPM) are RNA-binding RGG-box. A run of 3 repeats spans residues 245 to 250 (DRRGRP), 257 to 260 (GRGG), and 267 to 270 (GRGG). Residues 245-329 (DRRGRPVGFP…LMAYDRRGRP (85 aa)) are 2 X 6 AA repeats of D-R-R-G-R-P. Positions 250 to 329 (PVGFPMRGRG…LMAYDRRGRP (80 aa)) are disordered. Residues 252–266 (GFPMRGRGGFDRMPP) are compositionally biased toward low complexity. Positions 276–285 (SRRDYDDMSP) are enriched in basic and acidic residues. Serine 284 carries the phosphoserine modification. Residues 295–298 (GRGG) form a 3-4 repeat. Arginine 316 carries the omega-N-methylarginine modification. Residues 324–329 (DRRGRP) form a 2-2 repeat. Arginine 377 carries the post-translational modification Omega-N-methylarginine. The residue at position 379 (serine 379) is a Phosphoserine. At tyrosine 380 the chain carries Phosphotyrosine. Positions 387-451 (IITTQVTIPK…DQIQNAQYLL (65 aa)) constitute a KH 3 domain. 2 tandem repeats follow at residues 399-421 (AGSIIGKGGQRIKQIRHESGASI) and 404-407 (GKGG). Lysine 405 is subject to N6-acetyllysine; alternate. Residue lysine 405 forms a Glycyl lysine isopeptide (Lys-Gly) (interchain with G-Cter in SUMO2); alternate linkage. At serine 420 the chain carries Phosphoserine. Lysine 422 is covalently cross-linked (Glycyl lysine isopeptide (Lys-Gly) (interchain with G-Cter in SUMO1); alternate). A Glycyl lysine isopeptide (Lys-Gly) (interchain with G-Cter in SUMO2); alternate cross-link involves residue lysine 422. Lysine 422 is covalently cross-linked (Glycyl lysine isopeptide (Lys-Gly) (interchain with G-Cter in SUMO); alternate).

Identified in the spliceosome C complex. Interacts with ANKRD28, RBM42 and ZIK1. Interacts with DDX1. Interacts with MDM2; this interaction leads to ubiquitination and proteasomal degradation. Interacts with p53/TP53. Interacts with BRDT. Interacts with IVNS1ABP. Interacts with PPIA/CYPA. Part of a transcription inhibitory ribonucleoprotein complex composed at least of the circular RNA circZNF827, ZNF827 and HNRNPL. Sumoylated by CBX4. Sumoylation is increased upon DNA damage, such as that produced by doxorubicin, etoposide, UV light and camptothecin, due to enhanced CBX4 phosphorylation by HIPK2 under these conditions. Post-translationally, ubiquitinated by MDM2. Doxorubicin treatment does not affect monoubiquitination, but slightly decreases HNRNPK poly-ubiquitination. In terms of processing, O-glycosylated (O-GlcNAcylated), in a cell cycle-dependent manner.

It localises to the cytoplasm. The protein localises to the nucleus. It is found in the nucleoplasm. The protein resides in the cell projection. Its subcellular location is the podosome. One of the major pre-mRNA-binding proteins. Binds tenaciously to poly(C) sequences. Likely to play a role in the nuclear metabolism of hnRNAs, particularly for pre-mRNAs that contain cytidine-rich sequences. Can also bind poly(C) single-stranded DNA. Plays an important role in p53/TP53 response to DNA damage, acting at the level of both transcription activation and repression. When sumoylated, acts as a transcriptional coactivator of p53/TP53, playing a role in p21/CDKN1A and 14-3-3 sigma/SFN induction. As far as transcription repression is concerned, acts by interacting with long intergenic RNA p21 (lincRNA-p21), a non-coding RNA induced by p53/TP53. This interaction is necessary for the induction of apoptosis, but not cell cycle arrest. As part of a ribonucleoprotein complex composed at least of ZNF827, HNRNPL and the circular RNA circZNF827 that nucleates the complex on chromatin, may negatively regulate the transcription of genes involved in neuronal differentiation. The polypeptide is Heterogeneous nuclear ribonucleoprotein K (HNRNPK) (Oryctolagus cuniculus (Rabbit)).